We begin with the raw amino-acid sequence, 214 residues long: MKLFIDTANIEEIKEVAQWGILSGVTTNPSLIAKEGRDFKQVIAEITAIVEGPISAEVVSLQAEEMLKEAQDLVAIHPNVVIKVPMTAEGLKAVKGFSEQGIKTNVTLVFSANQALLAARAGASFVSPFVGRLDDIGQEGSELVRQIIEIYDIHGIETEIIAASIRHTQHLTDAALAGAHIATVPYKVLKQSLLHPLTDQGIEKFLKDWEGLVK.

K83 serves as the catalytic Schiff-base intermediate with substrate.

Belongs to the transaldolase family. Type 3B subfamily.

It localises to the cytoplasm. It carries out the reaction D-sedoheptulose 7-phosphate + D-glyceraldehyde 3-phosphate = D-erythrose 4-phosphate + beta-D-fructose 6-phosphate. The protein operates within carbohydrate degradation; pentose phosphate pathway; D-glyceraldehyde 3-phosphate and beta-D-fructose 6-phosphate from D-ribose 5-phosphate and D-xylulose 5-phosphate (non-oxidative stage): step 2/3. In terms of biological role, transaldolase is important for the balance of metabolites in the pentose-phosphate pathway. The sequence is that of Probable transaldolase from Alkaliphilus metalliredigens (strain QYMF).